A 93-amino-acid chain; its full sequence is Large ribosomal subunit protein uL23cz/uL23cy (93 aa).

This sequence belongs to the universal ribosomal protein uL23 family. In terms of assembly, part of the 50S ribosomal subunit.

The protein resides in the plastid. Its subcellular location is the chloroplast. Its function is as follows. Binds to 23S rRNA. This Arabidopsis thaliana (Mouse-ear cress) protein is Large ribosomal subunit protein uL23cz/uL23cy (rpl23-A).